Consider the following 271-residue polypeptide: Aquaporin-11 (271 aa).

Topologically, residues 1 to 14 are cytoplasmic; sequence MSALLGLPPEVQDT. Residues 15 to 35 traverse the membrane as a helical segment; it reads CISLGLMLLVVLFMGLARVIA. Topologically, residues 36-41 are lumenal; sequence RQQLHR. Residues 42-62 traverse the membrane as a helical segment; sequence PMVHAFVLEFLATFQLCYCTH. Residues 63–76 lie on the Cytoplasmic side of the membrane; it reads ELQLLSEQDSGHPT. A helical membrane pass occupies residues 77–97; sequence WTLTLIYFFSLVHGLTLVGTA. Over 98–166 the chain is Lumenal; that stretch reads SNPCGVMMQM…NPINTDISKA (69 aa). Positions 99–101 match the NPC motif; the sequence is NPC. The helical transmembrane segment at 167–187 threads the bilayer; it reads IIIEAICSFIFHSALLHFQEV. Over 188 to 194 the chain is Cytoplasmic; the sequence is RTKLRIH. The chain crosses the membrane as a helical span at residues 195-215; sequence VLAALITFLAYAGGSLTGALF. Positions 216–218 match the NPA motif; it reads NPA. Residues 216 to 234 lie on the Lumenal side of the membrane; that stretch reads NPALALSLHFPCFDESFYK. Residues 235-255 traverse the membrane as a helical segment; the sequence is FFVVYWVAPSLGVLLMILMFS. The Cytoplasmic segment spans residues 256-271; it reads FFLPWLHNNQLSNKKE.

Belongs to the MIP/aquaporin (TC 1.A.8) family. AQP11/AQP12 subfamily. In terms of assembly, homodimer; disulfide-linked. Homotetramer. Can also form homomultimer. In terms of processing, not glycosylated. Expressed in retina specifically at retinal Mueller glial cells. Expressed in adult testis, in the elongated spermatids (ES) and in residual bodies inside Sertoli cells.

The protein resides in the endoplasmic reticulum membrane. It is found in the cytoplasmic vesicle membrane. The protein localises to the cell membrane. It carries out the reaction H2O(in) = H2O(out). The catalysed reaction is glycerol(in) = glycerol(out). The enzyme catalyses H2O2(out) = H2O2(in). Functionally, channel protein that facilitates the transport of water, glycerol and hydrogen peroxide across membrane of cell or organelles guaranteeing intracellular homeostasis in several organes like liver, kidney and brain. In situation of stress, participates in endoplasmic reticulum (ER) homeostasis by regulating redox homeostasis through the transport of hydrogen peroxide across the endoplasmic reticulum membrane thereby regulating the oxidative stress through the NADPH oxidase 2 pathway. Plays a role by maintaining an environment suitable for translation or protein foldings in the ER lumen namely by participating in the PKD1 glycosylation processing resulting in regulation of PKD1 membrane trafficking thereby preventing the accumulation of unfolding protein in ER. Plays a role in the proximal tubule function by regulating its endosomal acidification. May play a role in postnatal kidney development. The sequence is that of Aquaporin-11 from Rattus norvegicus (Rat).